Consider the following 185-residue polypeptide: Elongation factor P (185 aa).

Belongs to the elongation factor P family.

It localises to the cytoplasm. The protein operates within protein biosynthesis; polypeptide chain elongation. Functionally, involved in peptide bond synthesis. Stimulates efficient translation and peptide-bond synthesis on native or reconstituted 70S ribosomes in vitro. Probably functions indirectly by altering the affinity of the ribosome for aminoacyl-tRNA, thus increasing their reactivity as acceptors for peptidyl transferase. This is Elongation factor P from Synechococcus sp. (strain JA-2-3B'a(2-13)) (Cyanobacteria bacterium Yellowstone B-Prime).